Reading from the N-terminus, the 240-residue chain is UDP-2,3-diacylglucosamine hydrolase (240 aa).

Residues Asp8, His10, Asp41, Asn79, and His114 each contribute to the Mn(2+) site. 79–80 (NR) contacts substrate. Residues Asp122, Ser160, Asn164, Lys167, and His195 each coordinate substrate. Residues His195 and His197 each coordinate Mn(2+).

This sequence belongs to the LpxH family. The cofactor is Mn(2+).

It localises to the cell inner membrane. It catalyses the reaction UDP-2-N,3-O-bis[(3R)-3-hydroxytetradecanoyl]-alpha-D-glucosamine + H2O = 2-N,3-O-bis[(3R)-3-hydroxytetradecanoyl]-alpha-D-glucosaminyl 1-phosphate + UMP + 2 H(+). The protein operates within glycolipid biosynthesis; lipid IV(A) biosynthesis; lipid IV(A) from (3R)-3-hydroxytetradecanoyl-[acyl-carrier-protein] and UDP-N-acetyl-alpha-D-glucosamine: step 4/6. Hydrolyzes the pyrophosphate bond of UDP-2,3-diacylglucosamine to yield 2,3-diacylglucosamine 1-phosphate (lipid X) and UMP by catalyzing the attack of water at the alpha-P atom. Involved in the biosynthesis of lipid A, a phosphorylated glycolipid that anchors the lipopolysaccharide to the outer membrane of the cell. The chain is UDP-2,3-diacylglucosamine hydrolase from Salmonella schwarzengrund (strain CVM19633).